The sequence spans 160 residues: Large ribosomal subunit protein uL11 (160 aa).

This sequence belongs to the universal ribosomal protein uL11 family. In terms of assembly, part of the ribosomal stalk of the 50S ribosomal subunit. Interacts with L10 and the large rRNA to form the base of the stalk. L10 forms an elongated spine to which L12 dimers bind in a sequential fashion forming a multimeric L10(L12)X complex.

Its function is as follows. Forms part of the ribosomal stalk which helps the ribosome interact with GTP-bound translation factors. This Methanococcus aeolicus (strain ATCC BAA-1280 / DSM 17508 / OCM 812 / Nankai-3) protein is Large ribosomal subunit protein uL11.